The following is a 451-amino-acid chain: Coproporphyrinogen III oxidase (451 aa).

FAD contacts are provided by residues 10 to 15 (GGGISG), 36 to 37 (DP), 58 to 61 (GAEA), valine 242, tryptophan 393, and 429 to 431 (IGV).

Belongs to the protoporphyrinogen/coproporphyrinogen oxidase family. Coproporphyrinogen III oxidase subfamily. Requires FAD as cofactor.

It localises to the cytoplasm. It carries out the reaction coproporphyrinogen III + 3 O2 = coproporphyrin III + 3 H2O2. It functions in the pathway porphyrin-containing compound metabolism; protoheme biosynthesis. In terms of biological role, involved in coproporphyrin-dependent heme b biosynthesis. Catalyzes the oxidation of coproporphyrinogen III to coproporphyrin III. This Mycobacterium leprae (strain TN) protein is Coproporphyrinogen III oxidase.